Reading from the N-terminus, the 273-residue chain is MSQRTVFFISDGTGITAETFGNAILAQFEFKPRHVRLPFIDSVDKAHQAIRQINHAAEVEGKRPIVFTTLVNMEILAVIKTHCNGMLLDMFGMFVAPLESELGIKSNHRVGRFSDASKSKEYDDRIEAINFSLAHDDGQSNKDLAGSDVILVGVSRSGKTPTSLYLAMQYGLKASNYPLIPEDFERRQLPPALVPHRKKIFGLTIAPERLSQIRNERRPHSTYASLANCRHEIHEAEAMMRREGIRWLSTTTKSIEEISTTILQEIRPERLEY.

Residue glycine 153–threonine 160 coordinates ADP.

The protein belongs to the pyruvate, phosphate/water dikinase regulatory protein family. PSRP subfamily.

The enzyme catalyses [pyruvate, water dikinase] + ADP = [pyruvate, water dikinase]-phosphate + AMP + H(+). The catalysed reaction is [pyruvate, water dikinase]-phosphate + phosphate + H(+) = [pyruvate, water dikinase] + diphosphate. Bifunctional serine/threonine kinase and phosphorylase involved in the regulation of the phosphoenolpyruvate synthase (PEPS) by catalyzing its phosphorylation/dephosphorylation. This Polaromonas sp. (strain JS666 / ATCC BAA-500) protein is Putative phosphoenolpyruvate synthase regulatory protein.